We begin with the raw amino-acid sequence, 128 residues long: Iron-sulfur cluster insertion protein ErpA (128 aa).

Iron-sulfur cluster-binding residues include cysteine 56, cysteine 120, and cysteine 122.

Belongs to the HesB/IscA family. Homodimer. Iron-sulfur cluster is required as a cofactor.

Its function is as follows. Required for insertion of 4Fe-4S clusters for at least IspG. In Xylella fastidiosa (strain M23), this protein is Iron-sulfur cluster insertion protein ErpA.